The chain runs to 1057 residues: Adenylate-forming reductase stbB (1057 aa).

Residues 21-378 (STKRQPGAVC…FRLRTDMNFE (358 aa)) form an adenylation (A) domain region. AMP contacts are provided by residues histidine 251, 344-345 (NF), threonine 349, and 423-426 (AVGR). Residues 564–651 (ETLEEDIKAL…QMAAAIKNPS (88 aa)) form the Carrier domain. Position 600 is an O-(pantetheine 4'-phosphoryl)serine (serine 600). Positions 693-1025 (IVVVTGSSGS…SGAVILGTDV (333 aa)) are reductase (R) domain. Residues 700–703 (SGSL), 783–785 (AAW), tyrosine 858, and lysine 862 each bind NADP(+).

This sequence belongs to the adenylate-forming reductase family.

The catalysed reaction is ilicicolinate B + AH2 + ATP = ilicicolin B + A + AMP + diphosphate. It functions in the pathway secondary metabolite biosynthesis; terpenoid biosynthesis. Its function is as follows. Nonribosomal peptide synthase-like protein; part of the cluster that mediates the biosynthesis of LL-Z1272-beta, also known as ilicicolin B, a prenylated aryl-aldehyde produced by several fungi and that serves as a key pathway intermediate for many fungal meroterpenoids. The first step in the pathway is performed by the non-reducing polyketide synthase stbA that produces orsellinic acid by condensing acetyl-CoA with 3 malonyl-CoA units. The prenyltransferase stbC then prenylates orsenilic acid into grifolic acid. Finally, grifolic acid is reduced to ilicicolin B by the NRPS-like protein stbB. This Stachybotrys bisbyi (Hyalostachybotrys bisbyi) protein is Adenylate-forming reductase stbB.